The primary structure comprises 286 residues: 3-methyl-2-oxobutanoate hydroxymethyltransferase (286 aa).

Residues aspartate 67 and aspartate 106 each contribute to the Mg(2+) site. 3-methyl-2-oxobutanoate contacts are provided by residues 67-68 (DS), aspartate 106, and lysine 136. Glutamate 138 is a Mg(2+) binding site. Catalysis depends on glutamate 204, which acts as the Proton acceptor.

It belongs to the PanB family. In terms of assembly, homodecamer; pentamer of dimers. Mg(2+) serves as cofactor.

It localises to the cytoplasm. The catalysed reaction is 3-methyl-2-oxobutanoate + (6R)-5,10-methylene-5,6,7,8-tetrahydrofolate + H2O = 2-dehydropantoate + (6S)-5,6,7,8-tetrahydrofolate. It participates in cofactor biosynthesis; (R)-pantothenate biosynthesis; (R)-pantoate from 3-methyl-2-oxobutanoate: step 1/2. Its function is as follows. Catalyzes the reversible reaction in which hydroxymethyl group from 5,10-methylenetetrahydrofolate is transferred onto alpha-ketoisovalerate to form ketopantoate. The chain is 3-methyl-2-oxobutanoate hydroxymethyltransferase from Mycobacterium leprae (strain TN).